A 146-amino-acid chain; its full sequence is NADH-quinone oxidoreductase subunit A (146 aa).

A run of 3 helical transmembrane segments spans residues 14-34 (FAVF…GAFF), 66-86 (FYLV…LYAW), and 96-116 (VGFI…VYLV).

This sequence belongs to the complex I subunit 3 family. NDH-1 is composed of 13 different subunits. Subunits NuoA, H, J, K, L, M, N constitute the membrane sector of the complex.

The protein localises to the cell inner membrane. It carries out the reaction a quinone + NADH + 5 H(+)(in) = a quinol + NAD(+) + 4 H(+)(out). In terms of biological role, NDH-1 shuttles electrons from NADH, via FMN and iron-sulfur (Fe-S) centers, to quinones in the respiratory chain. The immediate electron acceptor for the enzyme in this species is believed to be ubiquinone. Couples the redox reaction to proton translocation (for every two electrons transferred, four hydrogen ions are translocated across the cytoplasmic membrane), and thus conserves the redox energy in a proton gradient. This Serratia proteamaculans (strain 568) protein is NADH-quinone oxidoreductase subunit A.